Reading from the N-terminus, the 141-residue chain is Nucleoside diphosphate kinase (141 aa).

ATP-binding residues include lysine 11, phenylalanine 59, arginine 87, threonine 93, arginine 104, and asparagine 114. The active-site Pros-phosphohistidine intermediate is the histidine 117.

It belongs to the NDK family. Homotetramer. Mg(2+) is required as a cofactor.

The protein localises to the cytoplasm. It catalyses the reaction a 2'-deoxyribonucleoside 5'-diphosphate + ATP = a 2'-deoxyribonucleoside 5'-triphosphate + ADP. The enzyme catalyses a ribonucleoside 5'-diphosphate + ATP = a ribonucleoside 5'-triphosphate + ADP. Its function is as follows. Major role in the synthesis of nucleoside triphosphates other than ATP. The ATP gamma phosphate is transferred to the NDP beta phosphate via a ping-pong mechanism, using a phosphorylated active-site intermediate. This Histophilus somni (strain 2336) (Haemophilus somnus) protein is Nucleoside diphosphate kinase.